Consider the following 45-residue polypeptide: Photosystem II reaction center protein K (45 aa).

The propeptide occupies 1-8 (MEAALLLA). Residues 24–44 (LPLIPLFFLLLAFVWQAAVGF) form a helical membrane-spanning segment.

The protein belongs to the PsbK family. In terms of assembly, PSII is composed of 1 copy each of membrane proteins PsbA, PsbB, PsbC, PsbD, PsbE, PsbF, PsbH, PsbI, PsbJ, PsbK, PsbL, PsbM, PsbT, PsbX, PsbY, PsbZ, Psb30/Ycf12, peripheral proteins PsbO, CyanoQ (PsbQ), PsbU, PsbV and a large number of cofactors. It forms dimeric complexes.

Its subcellular location is the cellular thylakoid membrane. Its function is as follows. One of the components of the core complex of photosystem II (PSII). PSII is a light-driven water:plastoquinone oxidoreductase that uses light energy to abstract electrons from H(2)O, generating O(2) and a proton gradient subsequently used for ATP formation. It consists of a core antenna complex that captures photons, and an electron transfer chain that converts photonic excitation into a charge separation. The protein is Photosystem II reaction center protein K of Picosynechococcus sp. (strain ATCC 27264 / PCC 7002 / PR-6) (Agmenellum quadruplicatum).